The primary structure comprises 323 residues: Acetyl esterase (323 aa).

The Involved in the stabilization of the negatively charged intermediate by the formation of the oxyanion hole signature appears at 91 to 93; it reads HGG. Catalysis depends on residues Ser165, Asp262, and His292.

Belongs to the 'GDXG' lipolytic enzyme family. As to quaternary structure, homodimer. Interacts with MalT and MelA.

The protein resides in the cytoplasm. In terms of biological role, displays esterase activity towards short chain fatty esters (acyl chain length of up to 8 carbons). Able to hydrolyze triacetylglycerol (triacetin) and tributyrylglycerol (tributyrin), but not trioleylglycerol (triolein) or cholesterol oleate. Negatively regulates MalT activity by antagonizing maltotriose binding. Inhibits MelA galactosidase activity. The chain is Acetyl esterase from Salmonella paratyphi A (strain AKU_12601).